Reading from the N-terminus, the 577-residue chain is Sensor protein ChvG (577 aa).

Residues 1 to 29 (MRGQRRWAHPFTLIRRLFGNAVFSSLTRR) are Cytoplasmic-facing. The helical transmembrane segment at 30–50 (IVFFNLVALVVLVGGIMYLNQ) threads the bilayer. Residues 51 to 260 (FREGLIDARV…DIDKIVHAER (210 aa)) are Periplasmic-facing. The helical transmembrane segment at 261 to 281 (LAIIRVFGVAALVNVILSLLL) threads the bilayer. Residues 282 to 577 (SSTIANPLRR…VLSLPAGPHP (296 aa)) are Cytoplasmic-facing. Positions 283–339 (STIANPLRRLSAAAIRVRRGGAKEREEIPDFSSRQDEIGNLSVALREMTTALYDRIA) constitute an HAMP domain. One can recognise a Histidine kinase domain in the interval 347–575 (DVSHELKNPL…RFVLSLPAGP (229 aa)). Histidine 350 carries the post-translational modification Phosphohistidine.

Homodimer.

The protein resides in the cell inner membrane. It catalyses the reaction ATP + protein L-histidine = ADP + protein N-phospho-L-histidine.. It functions in the pathway glycan metabolism; exopolysaccharide biosynthesis. Functionally, member of a two-component regulatory system ChvG(ExoS)/ChvI involved in regulating the production of succinoglycan. Activates ChvI by phosphorylation. This chain is Sensor protein ChvG (chvG), found in Rhizobium meliloti (strain 1021) (Ensifer meliloti).